The chain runs to 248 residues: 23S rRNA (guanosine-2'-O-)-methyltransferase RlmB (248 aa).

S-adenosyl-L-methionine is bound by residues Gly-200, Ile-220, and Leu-229.

It belongs to the class IV-like SAM-binding methyltransferase superfamily. RNA methyltransferase TrmH family. RlmB subfamily.

The protein resides in the cytoplasm. It catalyses the reaction guanosine(2251) in 23S rRNA + S-adenosyl-L-methionine = 2'-O-methylguanosine(2251) in 23S rRNA + S-adenosyl-L-homocysteine + H(+). Its function is as follows. Specifically methylates the ribose of guanosine 2251 in 23S rRNA. This is 23S rRNA (guanosine-2'-O-)-methyltransferase RlmB from Acinetobacter baylyi (strain ATCC 33305 / BD413 / ADP1).